The sequence spans 88 residues: Putative membrane protein insertion efficiency factor (88 aa).

Residues 66-88 (DFVPPKKDKNADSEHSCKAHHHH) form a disordered region. A compositionally biased stretch (basic and acidic residues) spans 69–82 (PPKKDKNADSEHSC).

Belongs to the UPF0161 family.

It localises to the cell membrane. Could be involved in insertion of integral membrane proteins into the membrane. The polypeptide is Putative membrane protein insertion efficiency factor (Listeria monocytogenes serotype 4a (strain HCC23)).